The sequence spans 158 residues: Eukaryotic translation initiation factor 5A-3 (158 aa).

The span at 1–10 (MSDDEHHFES) shows a compositional bias: basic and acidic residues. Positions 1-23 (MSDDEHHFESSDAGASKTYPQQA) are disordered. Ser-2 carries the post-translational modification Phosphoserine. At Lys-51 the chain carries Hypusine.

It belongs to the eIF-5A family. In terms of processing, lys-52 undergoes hypusination, a unique post-translational modification that consists in the addition of a butylamino group from spermidine to lysine side chain, leading to the formation of the unusual amino acid hypusine. eIF-5As are the only known proteins to undergo this modification, which is essential for their function. In terms of tissue distribution, expressed in the vascular tissues of roots, stems and leaves. Localized in phloem companion cells rather than sieve-tube members. Not expressed in xylem or procambium. Detected in root tips and in the chalazal tissue of fertilized ovules.

Functionally, translation factor that promotes translation elongation and termination, particularly upon ribosome stalling at specific amino acid sequence contexts. Binds between the exit (E) and peptidyl (P) site of the ribosome and promotes rescue of stalled ribosome: specifically required for efficient translation of polyproline-containing peptides as well as other motifs that stall the ribosome. Acts as a ribosome quality control (RQC) cofactor by joining the RQC complex to facilitate peptidyl transfer during CAT tailing step. Involved in supporting growth and plays a regulatory role in the response to sub-lethal osmotic and nutrient stress. The protein is Eukaryotic translation initiation factor 5A-3 (ELF5A-3) of Arabidopsis thaliana (Mouse-ear cress).